The sequence spans 237 residues: Phosphoribosylaminoimidazole-succinocarboxamide synthase (237 aa).

The protein belongs to the SAICAR synthetase family.

The enzyme catalyses 5-amino-1-(5-phospho-D-ribosyl)imidazole-4-carboxylate + L-aspartate + ATP = (2S)-2-[5-amino-1-(5-phospho-beta-D-ribosyl)imidazole-4-carboxamido]succinate + ADP + phosphate + 2 H(+). The protein operates within purine metabolism; IMP biosynthesis via de novo pathway; 5-amino-1-(5-phospho-D-ribosyl)imidazole-4-carboxamide from 5-amino-1-(5-phospho-D-ribosyl)imidazole-4-carboxylate: step 1/2. The protein is Phosphoribosylaminoimidazole-succinocarboxamide synthase of Idiomarina loihiensis (strain ATCC BAA-735 / DSM 15497 / L2-TR).